Consider the following 299-residue polypeptide: N-acetylneuraminate lyase (299 aa).

The aceneuramate site is built by S45 and S46. The active-site Proton donor is the Y134. K161 (schiff-base intermediate with substrate) is an active-site residue. The aceneuramate site is built by T163, G185, D187, and E188.

The protein belongs to the DapA family. NanA subfamily. As to quaternary structure, homotetramer.

The protein resides in the cytoplasm. It carries out the reaction aceneuramate = aldehydo-N-acetyl-D-mannosamine + pyruvate. Its pathway is amino-sugar metabolism; N-acetylneuraminate degradation; D-fructose 6-phosphate from N-acetylneuraminate: step 1/5. Catalyzes the reversible aldol cleavage of N-acetylneuraminic acid (sialic acid; Neu5Ac) to form pyruvate and N-acetylmannosamine (ManNAc) via a Schiff base intermediate. This Rhizobium meliloti (strain 1021) (Ensifer meliloti) protein is N-acetylneuraminate lyase.